A 600-amino-acid chain; its full sequence is MNYYKTHTCNELRKNDVEKEVTLSGWMYRKRDHGNLIFVDLRDFYGITQLVFNNDKDFFCKISDLKPESVITVTGIVKARTEDTINISISTGEIEVTVNNLQIESEVEFHHNEETAKEERSILASIADDQEYPENMRFKYRFLDLRREKVRNNIVLRSQIIAELRKFMIEQGFLEIQTPILTASSPEGARDYLVPSRLNPGKFYALPQAPQIFKQLLMISGFDKYFQIAPCFRDEDARADRSPGEFYQLDLEMSFVTQEDVFQVIESTLYKVFAKFSRKSVDKGFSRITYKEAMLKYGSDKPDLRNPLLISDVTEIFRDSEFNIFKSNIERGMVVRAIPAPKTAEEPRSFFDKKIEHTQKEFGAKGLGYITFNKDGTAKGPIAKFLDDNRLNHIREATNIKPGDSVFFASDKENEAATIAGKVRTLLGSELGLIDNNIFKFCWVVDFPYFVYDDKSKKIDFFHNPFSMPHGGLKDLEEKNPLDILAYQYDLVCNGIELSSGAIRNNKLDIMYKAFATAGYNKEEVNKKFGALVRAFRFGVPPHGGIAPGIDRIVMLLADAPNIREITCFPMNQQGEDVLMDAPSKVDNKHLRELSLKVVE.

E187 is an L-aspartate binding site. The interval Q211–K214 is aspartate. The L-aspartate site is built by R233 and H463. ATP is bound at residue R233–E235. Residue E497 participates in ATP binding. Residue R504 coordinates L-aspartate. An ATP-binding site is contributed by G549–R552.

This sequence belongs to the class-II aminoacyl-tRNA synthetase family. Type 1 subfamily. In terms of assembly, homodimer.

It localises to the cytoplasm. The enzyme catalyses tRNA(Asx) + L-aspartate + ATP = L-aspartyl-tRNA(Asx) + AMP + diphosphate. Its function is as follows. Aspartyl-tRNA synthetase with relaxed tRNA specificity since it is able to aspartylate not only its cognate tRNA(Asp) but also tRNA(Asn). Reaction proceeds in two steps: L-aspartate is first activated by ATP to form Asp-AMP and then transferred to the acceptor end of tRNA(Asp/Asn). The sequence is that of Aspartate--tRNA(Asp/Asn) ligase from Wolbachia sp. subsp. Brugia malayi (strain TRS).